A 157-amino-acid polypeptide reads, in one-letter code: Ribosomal RNA large subunit methyltransferase H (157 aa).

S-adenosyl-L-methionine is bound by residues Leu-73, Gly-105, and Met-124 to Phe-129.

The protein belongs to the RNA methyltransferase RlmH family. In terms of assembly, homodimer.

It is found in the cytoplasm. The enzyme catalyses pseudouridine(1915) in 23S rRNA + S-adenosyl-L-methionine = N(3)-methylpseudouridine(1915) in 23S rRNA + S-adenosyl-L-homocysteine + H(+). Functionally, specifically methylates the pseudouridine at position 1915 (m3Psi1915) in 23S rRNA. The polypeptide is Ribosomal RNA large subunit methyltransferase H (Bacteroides fragilis (strain ATCC 25285 / DSM 2151 / CCUG 4856 / JCM 11019 / LMG 10263 / NCTC 9343 / Onslow / VPI 2553 / EN-2)).